Reading from the N-terminus, the 467-residue chain is Mothers against decapentaplegic homolog 2 (467 aa).

Serine 2 carries the N-acetylserine modification. Phosphothreonine is present on threonine 8. The MH1 domain maps to 10–176; it reads PVVKRLLGWK…YQRVETPVLP (167 aa). N6-acetyllysine is present on lysine 19. Zn(2+) is bound by residues cysteine 74, cysteine 149, cysteine 161, and histidine 166. Positions 207-217 are enriched in polar residues; that stretch reads PAGIEPQSNYI. Residues 207–251 form a disordered region; the sequence is PAGIEPQSNYIPETPPPGYISEDGETSDQQLNQSMDTGSPAELSP. Threonine 220 bears the Phosphothreonine mark. A PY-motif motif is present at residues 221–225; the sequence is PPPGY. Residues 233 to 243 show a composition bias toward polar residues; sequence SDQQLNQSMDT. Residue serine 240 is modified to Phosphoserine; by CAMK2. Phosphoserine occurs at positions 245, 250, 255, 458, 460, and 464. The 194-residue stretch at 274 to 467 folds into the MH2 domain; sequence WCSIAYYELN…SPSVRCSSMS (194 aa). Serine 465 and serine 467 each carry phosphoserine; by TGFBR1.

It belongs to the dwarfin/SMAD family. Monomer; in the absence of TGF-beta. Heterodimer; in the presence of TGF-beta. Forms a heterodimer with co-SMAD, SMAD4, in the nucleus to form the transactivation complex SMAD2/SMAD4. Found in a complex with SMAD3 and TRIM33 upon addition of TGF-beta. Identified in a complex that contains at least ZNF451, SMAD2, SMAD3 and SMAD4. Interacts (via the MH2 domain) with ZFYVE9; may form trimers with the SMAD4 co-SMAD. Interacts with TAZ/WWRT1. Interacts with FOXH1. Interacts with SNW1. Interacts with CREB-binding protein (CBP) and EP300. Interacts with SNON. Interacts with ALK4/ACVR1B. Interacts with SKOR1. Interacts with SKOR2. Interacts with PRDM16. Interacts (via MH2 domain) with LEMD3. Interacts with RBPMS. Interacts with WWP1. Interacts (dephosphorylated form, via the MH1 and MH2 domains) with RANBP3 (via its C-terminal R domain); the interaction results in the export of dephosphorylated SMAD3 out of the nucleus and termination of the TGF-beta signaling. Interacts with PDPK1 (via PH domain). Interacts with DAB2; the interactions are enhanced upon TGF-beta stimulation. Interacts with USP15. Interacts with PPP5C. Interacts with LDLRAD4 (via the SMAD interaction motif). Interacts (via MH2 domain) with PMEPA1 (via the SMAD interaction motif). Interacts with ZFHX3. Interacts with ZNF451. Interacts with SMURF2 when phosphorylated on Ser-465/467. Interacts with PPM1A. Interacts with TGF-beta. Interacts with TGFBR1. Interacts with TGIF. Interacts with SMAD3 and TRIM33. Interacts with ZNF580. Interacts with NEDD4L in response to TGF-beta. Interacts with HGS. Interacts with AIP1. Interacts with WWP1. Interacts with PML. Interacts weakly with ZNF8. Interacts (when phosphorylated) with RNF111; RNF111 acts as an enhancer of the transcriptional responses by mediating ubiquitination and degradation of SMAD2 inhibitors. Interacts with YAP1 (when phosphorylated at 'Ser-55'). Interacts when phosphorylated with IPO7; the interaction facilitates translocation of SMAD2 to the nucleus. Interacts with MTMR4; negatively regulates TGF-beta signaling through SMAD2 dephosphorylation and retention in endosomes. In terms of processing, in response to TGF-beta, phosphorylated on the C-terminal SXS motif by TGF-beta and activin type 1 receptor kinases, phosphorylation declines progressively in a KMT5A-dependent manner. Phosphorylation in this motif is required for interaction with a number of proteins including SMURF2, SNON and SMAD4 in response to TGF-beta. Dephosphorylated in this motif by PPM1A leading to disruption of the SMAD2/3-SMAD4 complex, nuclear export and termination of the TGF-beta signaling. In response to decorin, the naturally occurring inhibitor of TGF-beta signaling, phosphorylated on Ser-240 by CaMK2. Phosphorylated by MAPK3 upon EGF stimulation; which increases transcriptional activity and stability, and is blocked by calmodulin. Phosphorylated by PDPK1. Post-translationally, acetylated on Lys-19 by coactivators in response to TGF-beta signaling, which increases transcriptional activity. In response to TGF-beta, ubiquitinated by NEDD4L; which promotes its degradation. Monoubiquitinated, leading to prevent DNA-binding. Deubiquitination by USP15 alleviates inhibition and promotes activation of TGF-beta target genes. Ubiquitinated by RNF111, leading to its degradation: only SMAD2 proteins that are 'in use' are targeted by RNF111, RNF111 playing a key role in activating SMAD2 and regulating its turnover.

The protein localises to the cytoplasm. It localises to the nucleus. Functionally, receptor-regulated SMAD (R-SMAD) that is an intracellular signal transducer and transcriptional modulator activated by TGF-beta (transforming growth factor) and activin type 1 receptor kinases. Binds the TRE element in the promoter region of many genes that are regulated by TGF-beta and, on formation of the SMAD2/SMAD4 complex, activates transcription. Promotes TGFB1-mediated transcription of odontoblastic differentiation genes in dental papilla cells. Positively regulates PDPK1 kinase activity by stimulating its dissociation from the 14-3-3 protein YWHAQ which acts as a negative regulator. This chain is Mothers against decapentaplegic homolog 2 (SMAD2), found in Pongo abelii (Sumatran orangutan).